A 620-amino-acid polypeptide reads, in one-letter code: 1-deoxy-D-xylulose-5-phosphate synthase (620 aa).

Residues H80 and 121-123 (GHS) each bind thiamine diphosphate. Residue D152 participates in Mg(2+) binding. Residues 153 to 154 (GA), N181, Y288, and E370 contribute to the thiamine diphosphate site. N181 is a Mg(2+) binding site.

The protein belongs to the transketolase family. DXPS subfamily. In terms of assembly, homodimer. Requires Mg(2+) as cofactor. Thiamine diphosphate is required as a cofactor.

It catalyses the reaction D-glyceraldehyde 3-phosphate + pyruvate + H(+) = 1-deoxy-D-xylulose 5-phosphate + CO2. It functions in the pathway metabolic intermediate biosynthesis; 1-deoxy-D-xylulose 5-phosphate biosynthesis; 1-deoxy-D-xylulose 5-phosphate from D-glyceraldehyde 3-phosphate and pyruvate: step 1/1. Its function is as follows. Catalyzes the acyloin condensation reaction between C atoms 2 and 3 of pyruvate and glyceraldehyde 3-phosphate to yield 1-deoxy-D-xylulose-5-phosphate (DXP). The sequence is that of 1-deoxy-D-xylulose-5-phosphate synthase from Escherichia coli O7:K1 (strain IAI39 / ExPEC).